A 203-amino-acid polypeptide reads, in one-letter code: Small ribosomal subunit protein uS5 (203 aa).

Positions 49 to 112 (FEERVVKIKR…KNANNNLIKV (64 aa)) constitute an S5 DRBM domain.

This sequence belongs to the universal ribosomal protein uS5 family. As to quaternary structure, part of the 30S ribosomal subunit. Contacts proteins S4 and S8.

In terms of biological role, with S4 and S12 plays an important role in translational accuracy. Its function is as follows. Located at the back of the 30S subunit body where it stabilizes the conformation of the head with respect to the body. This chain is Small ribosomal subunit protein uS5, found in Ureaplasma parvum serovar 3 (strain ATCC 700970).